Here is a 111-residue protein sequence, read N- to C-terminus: Ribonuclease P protein component (111 aa).

It belongs to the RnpA family. As to quaternary structure, consists of a catalytic RNA component (M1 or rnpB) and a protein subunit.

The catalysed reaction is Endonucleolytic cleavage of RNA, removing 5'-extranucleotides from tRNA precursor.. Its function is as follows. RNaseP catalyzes the removal of the 5'-leader sequence from pre-tRNA to produce the mature 5'-terminus. It can also cleave other RNA substrates such as 4.5S RNA. The protein component plays an auxiliary but essential role in vivo by binding to the 5'-leader sequence and broadening the substrate specificity of the ribozyme. The protein is Ribonuclease P protein component of Streptococcus thermophilus (strain ATCC BAA-491 / LMD-9).